The primary structure comprises 219 residues: Bacterial microcompartment shell protein EutL (219 aa).

BMC circularly permuted domains lie at 1–113 and 114–215; these read MPAL…GAAF and QWAN…ARNP. Residues aspartate 45, aspartate 46, glutamate 83, and phenylalanine 113 each coordinate ethanolamine. A part of the acidic patch lining the small pore region spans residues 45–46; it reads DD. Glutamate 157 serves as a coordination point for Zn(2+). Residue 183–185 participates in ethanolamine binding; the sequence is TNY.

Belongs to the EutL/PduB family. As to quaternary structure, homotrimerizes to form a pseudohexamer. The trimers form a two-dimensional array about 37 Angstroms thick.

It is found in the bacterial microcompartment. It participates in amine and polyamine degradation; ethanolamine degradation. A component of the bacterial microcompartment (BMC) shell dedicated to ethanolamine degradation. Two crystal forms have been seen; a form with a closed central pore that has 3 very small (1.1-2.2 Angstroms) channels per trimer lined by acidic and aromatic residues. A form with a large central pore (8-12 Angstroms) has also been seen; this is probably a functional pore which allows molecules to enter and exit the BMC in a selective, gated manner. Another group only sees the central pore in the presence of Zn(2+); soaking crystals in ZnCl(2) leads to dramatic conformational changes that open a central pore of about 12 Angstroms. Whether Zn(2+) binding is physiologically relevant is unclear, however it suggests a gating mechanism exists. Ethanolamine-binding by the small channels has been hypothesized to stabilize the EutL central pore in a closed (non-transporting) state. An open pore is thought to be large enough to transport ATP and/or cobalamin. The chain is Bacterial microcompartment shell protein EutL (eutL) from Escherichia coli (strain K12).